Reading from the N-terminus, the 418-residue chain is Tyrosine--tRNA ligase (418 aa).

L-tyrosine is bound at residue tyrosine 34. The 'HIGH' region signature appears at 39–48 (PTADSLHLGH). Residues tyrosine 169 and glutamine 173 each coordinate L-tyrosine. Residues 229-233 (KFGKS) carry the 'KMSKS' region motif. Lysine 232 contributes to the ATP binding site. An S4 RNA-binding domain is found at 352-418 (NNIVELLVSS…GKKKYFVLTY (67 aa)).

The protein belongs to the class-I aminoacyl-tRNA synthetase family. TyrS type 1 subfamily. Homodimer.

It is found in the cytoplasm. It catalyses the reaction tRNA(Tyr) + L-tyrosine + ATP = L-tyrosyl-tRNA(Tyr) + AMP + diphosphate + H(+). In terms of biological role, catalyzes the attachment of tyrosine to tRNA(Tyr) in a two-step reaction: tyrosine is first activated by ATP to form Tyr-AMP and then transferred to the acceptor end of tRNA(Tyr). This is Tyrosine--tRNA ligase from Streptococcus pneumoniae serotype 19F (strain G54).